The sequence spans 164 residues: Anterior gradient protein 3 (164 aa).

The first 19 residues, 1 to 19 (MYFPMIELTLVLLASSNLA), serve as a signal peptide directing secretion. The Prevents secretion from ER motif lies at 161–164 (QTEL).

This sequence belongs to the AGR family.

The protein resides in the endoplasmic reticulum. The protein localises to the cytoplasm. Functionally, required for calcium-mediated regulation of ciliary beat frequency in the airway. The polypeptide is Anterior gradient protein 3 (Xenopus tropicalis (Western clawed frog)).